The chain runs to 173 residues: Crossover junction endodeoxyribonuclease RuvC (173 aa).

Catalysis depends on residues D8, E67, and D139. Positions 8, 67, and 139 each coordinate Mg(2+).

The protein belongs to the RuvC family. In terms of assembly, homodimer which binds Holliday junction (HJ) DNA. The HJ becomes 2-fold symmetrical on binding to RuvC with unstacked arms; it has a different conformation from HJ DNA in complex with RuvA. In the full resolvosome a probable DNA-RuvA(4)-RuvB(12)-RuvC(2) complex forms which resolves the HJ. Mg(2+) is required as a cofactor.

Its subcellular location is the cytoplasm. The catalysed reaction is Endonucleolytic cleavage at a junction such as a reciprocal single-stranded crossover between two homologous DNA duplexes (Holliday junction).. Functionally, the RuvA-RuvB-RuvC complex processes Holliday junction (HJ) DNA during genetic recombination and DNA repair. Endonuclease that resolves HJ intermediates. Cleaves cruciform DNA by making single-stranded nicks across the HJ at symmetrical positions within the homologous arms, yielding a 5'-phosphate and a 3'-hydroxyl group; requires a central core of homology in the junction. The consensus cleavage sequence is 5'-(A/T)TT(C/G)-3'. Cleavage occurs on the 3'-side of the TT dinucleotide at the point of strand exchange. HJ branch migration catalyzed by RuvA-RuvB allows RuvC to scan DNA until it finds its consensus sequence, where it cleaves and resolves the cruciform DNA. The protein is Crossover junction endodeoxyribonuclease RuvC of Vibrio parahaemolyticus serotype O3:K6 (strain RIMD 2210633).